The primary structure comprises 141 residues: Nucleoside diphosphate kinase 1 (141 aa).

Residues K11, F59, R87, T93, R104, and N114 each contribute to the ATP site. The active-site Pros-phosphohistidine intermediate is the H117.

It belongs to the NDK family. Homotetramer. The cofactor is Mg(2+).

Its subcellular location is the cytoplasm. It carries out the reaction a 2'-deoxyribonucleoside 5'-diphosphate + ATP = a 2'-deoxyribonucleoside 5'-triphosphate + ADP. The enzyme catalyses a ribonucleoside 5'-diphosphate + ATP = a ribonucleoside 5'-triphosphate + ADP. Its function is as follows. Major role in the synthesis of nucleoside triphosphates other than ATP. The ATP gamma phosphate is transferred to the NDP beta phosphate via a ping-pong mechanism, using a phosphorylated active-site intermediate. This Protochlamydia amoebophila (strain UWE25) protein is Nucleoside diphosphate kinase 1.